A 2129-amino-acid chain; its full sequence is Transcription initiation factor TFIID subunit 1 (2129 aa).

The 423-residue stretch at 1–423 (MEMESDNSDD…VSQLHWEDDV (423 aa)) folds into the Protein kinase 1 domain. Disordered regions lie at residues 77-233 (AEPP…DVRE), 246-348 (FSRL…PKVA), 377-405 (TKAASTSSQPQLKDERRVKSPEDDVEDPS), and 445-497 (AGWL…AEAP). Over residues 79–88 (PPSDDEEEED) the composition is skewed to acidic residues. Composition is skewed to basic and acidic residues over residues 110–121 (VKREDGAVKAQD), 159–170 (VEAKLTKDDKEL), and 200–215 (DDSKSTDSKDADRKLD). Residues 263–273 (RHVRKRRRKRN) are compositionally biased toward basic residues. A compositionally biased stretch (polar residues) spans 280-289 (TTNTGGSDSP). Residues serine 286, serine 288, and serine 290 each carry the phosphoserine modification. Phosphoserine; by autocatalysis is present on serine 315. The segment covering 388–398 (LKDERRVKSPE) has biased composition (basic and acidic residues). The segment covering 470-494 (GSGSSKQGSGASSKKAQQNAQAKPA) has biased composition (low complexity). Serine 603 is subject to Phosphoserine. Disordered regions lie at residues 1016 to 1038 (KPTQTKEEQESQPKRSVTGTDAD), 1149 to 1208 (LENM…LATN), 1296 to 1336 (AQNQ…PSRK), 1368 to 1391 (GMQSSLSQSNPSLADDFDEQSEKE), and 1415 to 1435 (KRHGGDDGKRRSGSSSGFTLK). Residues 1019-1028 (QTKEEQESQP) are compositionally biased toward basic and acidic residues. The span at 1151-1160 (NMLSNKKTST) shows a compositional bias: polar residues. Residues 1163 to 1183 (SREREELERQELLRQLDEEHG) show a composition bias toward basic and acidic residues. Positions 1184-1193 (GPSGSGGAKG) are enriched in gly residues. Polar residues predominate over residues 1368–1379 (GMQSSLSQSNPS). The short motif at 1442 to 1448 (GKKKRRV) is the Nuclear localization signal element. Bromo domains are found at residues 1466–1574 (RRRT…LAER) and 1588–1696 (LLDD…LIEF). Residues 1515–2065 (MDLQTMREYI…QHQQMGQAAS (551 aa)) enclose the Protein kinase 2 domain. 4 disordered regions span residues 1710–1872 (TQER…LDQG), 1973–1992 (LSHEQDDNGPYNPAEASTSA), 2018–2042 (NNGMGIDDDLDISESDEEDDGSRVR), and 2101–2129 (QHQVMPPMQSEQLQQQQTPQGDNDYAWTF). The residue at position 1740 (serine 1740) is a Phosphoserine. Residues 1836 to 1863 (LDEDLQCSTDDEDDDEEEDFQEVSEDEN) are compositionally biased toward acidic residues. Positions 2023-2037 (IDDDLDISESDEEDD) are enriched in acidic residues. Over residues 2101 to 2120 (QHQVMPPMQSEQLQQQQTPQ) the composition is skewed to low complexity.

It belongs to the TAF1 family. As to quaternary structure, belongs to the TFIID complex which is composed of TATA binding protein (Tbp) and a number of TBP-associated factors (Tafs). Taf1 is the largest component of the TFIID complex. Interacts with Tbp, Taf2, Taf4 and Taf6. Requires Mg(2+) as cofactor.

The protein localises to the nucleus. The catalysed reaction is L-seryl-[protein] + ATP = O-phospho-L-seryl-[protein] + ADP + H(+). It catalyses the reaction L-threonyl-[protein] + ATP = O-phospho-L-threonyl-[protein] + ADP + H(+). With respect to regulation, autophosphorylates on Ser residues. Functionally, TFIID is a multimeric protein complex that plays a central role in mediating promoter responses to various activators and repressors. Largest component and core scaffold of the complex. Contains N- and C-terminal Ser/Thr kinase domains which can autophosphorylate or transphosphorylate other transcription factors. Possesses DNA-binding activity. Essential for progression of the G1 phase of the cell cycle. Negative regulator of the TATA box-binding activity of Tbp. This is Transcription initiation factor TFIID subunit 1 (Taf1) from Drosophila melanogaster (Fruit fly).